Here is a 303-residue protein sequence, read N- to C-terminus: Tumor necrosis factor receptor type 1-associated DEATH domain protein (303 aa).

The Nuclear export signal motif lies at 141–157; it reads QKDDELAEIDERLKSIK. Positions 208 to 298 constitute a Death domain; sequence TSAHIQHFAK…SIALDLLSLN (91 aa). The short motif at 224–237 is the Nuclear localization signal element; it reads KPVGRSLGKTCRAL.

In terms of assembly, heterodimer with tnfrsf1a.

The protein localises to the nucleus. It is found in the cytoplasm. It localises to the cytoskeleton. Functionally, adapter molecule for tnfrsf1a that specifically associates with the cytoplasmic domain of activated tnfrsf1a mediating its interaction with fadd. The protein is Tumor necrosis factor receptor type 1-associated DEATH domain protein of Xenopus laevis (African clawed frog).